The following is a 543-amino-acid chain: Peptide chain release factor 3 (543 aa).

Residues Lys-21–Leu-289 enclose the tr-type G domain. Residues Ser-30–Thr-37, Asp-98–His-102, and Asn-152–Asp-155 contribute to the GTP site.

This sequence belongs to the TRAFAC class translation factor GTPase superfamily. Classic translation factor GTPase family. PrfC subfamily.

It is found in the cytoplasm. In terms of biological role, increases the formation of ribosomal termination complexes and stimulates activities of RF-1 and RF-2. It binds guanine nucleotides and has strong preference for UGA stop codons. It may interact directly with the ribosome. The stimulation of RF-1 and RF-2 is significantly reduced by GTP and GDP, but not by GMP. The protein is Peptide chain release factor 3 of Thiobacillus denitrificans (strain ATCC 25259 / T1).